We begin with the raw amino-acid sequence, 402 residues long: Centromere protein C (402 aa).

Residue Lys-1 forms a Glycyl lysine isopeptide (Lys-Gly) (interchain with G-Cter in SUMO2) linkage. Positions 1–12 (KSEQSSFSSSSS) are enriched in low complexity. The disordered stretch occupies residues 1 to 118 (KSEQSSFSSS…HQKSQMSVET (118 aa)). Ser-5 bears the Phosphoserine mark. The Nuclear localization signal signature appears at 25 to 42 (QKPPAEKTNQSSKNIGKK). Residues 44–53 (APFKKQKRAN) show a composition bias toward basic residues. The span at 88-118 (PNPSGDTGSSKNQDSMAAQNVHQKSQMSVET) shows a compositional bias: polar residues. Lys-186 participates in a covalent cross-link: Glycyl lysine isopeptide (Lys-Gly) (interchain with G-Cter in SUMO2). Thr-193 carries the phosphothreonine modification. The tract at residues 196–218 (VRRTMRTRSKPLEYWRGERIDYQ) is MIF2 homology domain II. Phosphoserine is present on residues Ser-222 and Ser-232. Positions 239–257 (KRKAKGNLGRIITTANRKR) match the Nuclear localization signal motif. Residue Lys-266 forms a Glycyl lysine isopeptide (Lys-Gly) (interchain with G-Cter in SUMO2) linkage. Positions 349 to 402 (LVFYVNLGYLLCTLHETPYIVTTGDSFYVPSGNYYNIKNLLNEERVLLFTQIKS) are MIF2 homology domain III.

It belongs to the CENP-C/MIF2 family. In terms of assembly, oligomer. Component of the CENPA-NAC complex, at least composed of CENPA, CENPC, CENPH, CENPM, CENPN, CENPT and CENPU. The CENPA-NAC complex interacts with the CENPA-CAD complex, composed of CENPI, CENPK, CENPL, CENPO, CENPP, CENPQ, CENPR and CENPS. Binds to DAXX. Interacts with DNMT3B. Interacts directly with CENPA. Identified in a centromere complex containing histones H2A, H2B and H4, and at least CENPA, CENPB, CENPC, CENPT, CENPN, HJURP, SUPT16H, SSRP1 and RSF1. Interacts with MEIKIN.

It is found in the nucleus. It localises to the chromosome. The protein resides in the centromere. The protein localises to the kinetochore. Component of the CENPA-NAC (nucleosome-associated) complex, a complex that plays a central role in assembly of kinetochore proteins, mitotic progression and chromosome segregation. The CENPA-NAC complex recruits the CENPA-CAD (nucleosome distal) complex and may be involved in incorporation of newly synthesized CENPA into centromeres. CENPC recruits DNA methylation and DNMT3B to both centromeric and pericentromeric satellite repeats and regulates the histone code in these regions. In Ovis aries (Sheep), this protein is Centromere protein C (CENPC).